Consider the following 502-residue polypeptide: Glycerol kinase (502 aa).

Residue T14 participates in ADP binding. ATP contacts are provided by T14, T15, and S16. Position 14 (T14) interacts with sn-glycerol 3-phosphate. R18 lines the ADP pocket. Sn-glycerol 3-phosphate contacts are provided by R84, E85, and Y136. Glycerol is bound by residues R84, E85, and Y136. Phosphohistidine; by HPr is present on H232. Residue D246 coordinates sn-glycerol 3-phosphate. Glycerol-binding residues include D246 and Q247. The ADP site is built by T268 and G311. Residues T268, G311, Q315, and G412 each contribute to the ATP site. Residues G412 and N416 each contribute to the ADP site.

Belongs to the FGGY kinase family. As to quaternary structure, homotetramer and homodimer (in equilibrium). In terms of processing, the phosphoenolpyruvate-dependent sugar phosphotransferase system (PTS), including enzyme I, and histidine-containing protein (HPr) are required for the phosphorylation, which leads to the activation of the enzyme.

It catalyses the reaction glycerol + ATP = sn-glycerol 3-phosphate + ADP + H(+). It functions in the pathway polyol metabolism; glycerol degradation via glycerol kinase pathway; sn-glycerol 3-phosphate from glycerol: step 1/1. Its activity is regulated as follows. Activated by phosphorylation and inhibited by fructose 1,6-bisphosphate (FBP). Its function is as follows. Key enzyme in the regulation of glycerol uptake and metabolism. Catalyzes the phosphorylation of glycerol to yield sn-glycerol 3-phosphate. In Streptococcus pneumoniae (strain P1031), this protein is Glycerol kinase.